The following is a 219-amino-acid chain: 2-hydroxy-3-keto-5-methylthiopentenyl-1-phosphate phosphatase (219 aa).

It belongs to the HAD-like hydrolase superfamily. MtnX family.

The enzyme catalyses 2-hydroxy-5-methylsulfanyl-3-oxopent-1-enyl phosphate + H2O = 1,2-dihydroxy-5-(methylsulfanyl)pent-1-en-3-one + phosphate. The protein operates within amino-acid biosynthesis; L-methionine biosynthesis via salvage pathway; L-methionine from S-methyl-5-thio-alpha-D-ribose 1-phosphate: step 4/6. Dephosphorylates 2-hydroxy-3-keto-5-methylthiopentenyl-1-phosphate (HK-MTPenyl-1-P) yielding 1,2-dihydroxy-3-keto-5-methylthiopentene (DHK-MTPene). This Bacillus cereus (strain 03BB102) protein is 2-hydroxy-3-keto-5-methylthiopentenyl-1-phosphate phosphatase.